Reading from the N-terminus, the 579-residue chain is Trehalase (579 aa).

The first 15 residues, 1–15 (MRLFLLLVGLTTVIA), serve as a signal peptide directing secretion. Asn29 and Asn58 each carry an N-linked (GlcNAc...) asparagine glycan. Residues Arg161, 168–169 (WD), Asn205, 214–216 (RSQ), 279–281 (RPE), and Gly313 each bind substrate. A glycan (N-linked (GlcNAc...) asparagine) is linked at Asn205. The Proton donor/acceptor role is filled by Asp315. The N-linked (GlcNAc...) asparagine glycan is linked to Asn331. Glu513 serves as the catalytic Proton donor/acceptor. Glu528 contacts substrate. Polar residues predominate over residues 560–569 (DASANNGQSN). Residues 560 to 579 (DASANNGQSNEESETDSKEK) form a disordered region.

This sequence belongs to the glycosyl hydrolase 37 family. As to expression, in midgut and Malpighian tubules.

The protein resides in the basolateral cell membrane. It carries out the reaction alpha,alpha-trehalose + H2O = alpha-D-glucose + beta-D-glucose. Involved in uptake of hemolymph trehalose into epithelial cells in the midgut of feeding larvae. This chain is Trehalase, found in Bombyx mori (Silk moth).